The chain runs to 403 residues: Deubiquitinase and deneddylase Dub1 (403 aa).

The segment covering 1–11 has biased composition (polar residues); it reads MLSPTNSTSKT. The interval 1-24 is disordered; that stretch reads MLSPTNSTSKTAPVPPRDSSKPVL. The helical transmembrane segment at 40-60 threads the bilayer; it reads TALAVLLVVVTLGLILLFYSF. The tract at residues 77–132 is disordered; the sequence is KEQPTISIPVPLPSPPLAVPRPSTPPAPTPAISRPSTPSAPKPSTPPPLLPKAPKP. Pro residues-rich tracts occupy residues 86 to 105 and 114 to 130; these read VPLPSPPLAVPRPSTPPAPT and PSAPKPSTPPPLLPKAP. Residues histidine 277, aspartate 294, and cysteine 347 contribute to the active site.

The protein belongs to the peptidase C48 family.

The protein localises to the secreted. It localises to the host cell. Its subcellular location is the membrane. In terms of biological role, effector proteins function to alter host cell physiology and promote bacterial survival in host tissues. This protease possesses deubiquitinating and deneddylating activities. This is Deubiquitinase and deneddylase Dub1 (cdu1) from Chlamydia trachomatis serovar L2b (strain UCH-1/proctitis).